Reading from the N-terminus, the 259-residue chain is 4-hydroxy-tetrahydrodipicolinate reductase (259 aa).

NAD(+)-binding positions include 9–14 and E35; that span reads GAGGRM. Residue R36 participates in NADP(+) binding. Residues 92–94 and 116–119 contribute to the NAD(+) site; these read GTT and APNM. H149 functions as the Proton donor/acceptor in the catalytic mechanism. H150 is a binding site for (S)-2,3,4,5-tetrahydrodipicolinate. K153 serves as the catalytic Proton donor. 159 to 160 contributes to the (S)-2,3,4,5-tetrahydrodipicolinate binding site; sequence GT.

Belongs to the DapB family.

It is found in the cytoplasm. It catalyses the reaction (S)-2,3,4,5-tetrahydrodipicolinate + NAD(+) + H2O = (2S,4S)-4-hydroxy-2,3,4,5-tetrahydrodipicolinate + NADH + H(+). It carries out the reaction (S)-2,3,4,5-tetrahydrodipicolinate + NADP(+) + H2O = (2S,4S)-4-hydroxy-2,3,4,5-tetrahydrodipicolinate + NADPH + H(+). The protein operates within amino-acid biosynthesis; L-lysine biosynthesis via DAP pathway; (S)-tetrahydrodipicolinate from L-aspartate: step 4/4. Catalyzes the conversion of 4-hydroxy-tetrahydrodipicolinate (HTPA) to tetrahydrodipicolinate. This chain is 4-hydroxy-tetrahydrodipicolinate reductase, found in Nitratidesulfovibrio vulgaris (strain DP4) (Desulfovibrio vulgaris).